Here is a 65-residue protein sequence, read N- to C-terminus: Large ribosomal subunit protein uL29 (65 aa).

This sequence belongs to the universal ribosomal protein uL29 family.

In Hyphomonas neptunium (strain ATCC 15444), this protein is Large ribosomal subunit protein uL29.